A 354-amino-acid polypeptide reads, in one-letter code: Guanine nucleotide-binding protein G(i) subunit alpha-3 (354 aa).

Gly-2 is lipidated: N-myristoyl glycine. The S-palmitoyl cysteine moiety is linked to residue Cys-3. The G-alpha domain occupies 32–354 (KEVKLLLLGA…KNNLKECGLY (323 aa)). The interval 35–48 (KLLLLGAGESGKST) is G1 motif. GTP contacts are provided by Gly-42, Glu-43, Ser-44, Gly-45, Lys-46, Ser-47, Thr-48, Asp-150, Ser-151, Leu-175, Arg-176, Thr-177, Arg-178, Val-179, Lys-180, Thr-181, Val-201, Gly-203, Asn-269, Lys-270, Asp-272, Leu-273, Cys-325, Ala-326, and Thr-327. Ser-47 contacts Mg(2+). Residues 173 to 181 (DVLRTRVKT) form a G2 motif region. A Mg(2+)-binding site is contributed by Thr-181. The interval 196 to 205 (FKMFDVGGQR) is G3 motif. Residues 265–272 (ILFLNKKD) form a G4 motif region. A G5 motif region spans residues 324-329 (TCATDT).

The protein belongs to the G-alpha family. G(i/o/t/z) subfamily. In terms of assembly, heterotrimeric G proteins are composed of 3 units; alpha, beta and gamma. The alpha subunit contains the guanine nucleotide binding site. GTP binding causes dissociation of the heterotrimer, liberating the individual subunits so that they can interact with downstream effector proteins. Forms a complex with CCDC88A/GIV and EGFR which leads to enhanced EGFR signaling and triggering of cell migration; ligand stimulation is required for recruitment of GNAI3 to the complex. Interacts (inactive GDP-bound form) with CCDC88A/GIV (via GBA motif); the interaction leads to activation of GNAI3. Interacts (inactive GDP-bound form) with CCDC88C/DAPLE (via GBA motif); the interaction leads to activation of GNAI3. Interacts (inactive GDP-bound form) with NUCB1 (via GBA motif) and NUCB2 (via GBA motif); the interaction leads to activation of GNAI3. Interacts (inactive GDP-bound form) with PLCD4 (via GBA motif); the interaction leads to activation of GNAI3. Interacts with INSR; the interaction is probably mediated by CCDC88A/GIV. Interacts with GPSM1. Interacts (GDP-bound form) with GPSM2 (via GoLoco domains). Does not interact with RGS2. Interacts with RGS8 and RGS10; this strongly enhances the intrinsic GTPase activity. Interacts with RGS16; this strongly enhances the intrinsic GTPase activity. Interacts with RGS12. Interacts (via active GTP- or inactive GDP-bound form) with RGS14. Interacts (via active GTP-bound form) with TRPC5 (via ANK repeats) in a homotetrameric ion channel; the interaction is direct and activates the channel activity. In terms of tissue distribution, ubiquitously expressed.

The protein resides in the cytoplasm. It localises to the cell membrane. Its subcellular location is the cytoskeleton. The protein localises to the microtubule organizing center. It is found in the centrosome. Functionally, heterotrimeric guanine nucleotide-binding proteins (G proteins) function as transducers downstream of G protein-coupled receptors (GPCRs) in numerous signaling cascades. The alpha chain contains the guanine nucleotide binding site and alternates between an active, GTP-bound state and an inactive, GDP-bound state. Signaling by an activated GPCR promotes GDP release and GTP binding. The alpha subunit has a low GTPase activity that converts bound GTP to GDP, thereby terminating the signal. Both GDP release and GTP hydrolysis are modulated by numerous regulatory proteins. Signaling is mediated via effector proteins, such as adenylate cyclase. Inhibits adenylate cyclase activity, leading to decreased intracellular cAMP levels. Stimulates the activity of receptor-regulated K(+) channels. The active GTP-bound form prevents the association of RGS14 with centrosomes and is required for the translocation of RGS14 from the cytoplasm to the plasma membrane. May play a role in cell division. The active GTP-bound form activates the calcium permeant TRPC5 ion channels. The protein is Guanine nucleotide-binding protein G(i) subunit alpha-3 (GNAI3) of Cavia porcellus (Guinea pig).